We begin with the raw amino-acid sequence, 101 residues long: Large ribosomal subunit protein eL21 (101 aa).

Residues 1–18 (MVKHSKGYRTRSRSLLRK) are compositionally biased toward basic residues. Positions 1–24 (MVKHSKGYRTRSRSLLRKSPRERG) are disordered.

This sequence belongs to the eukaryotic ribosomal protein eL21 family.

This is Large ribosomal subunit protein eL21 (rpl21e) from Saccharolobus solfataricus (strain ATCC 35092 / DSM 1617 / JCM 11322 / P2) (Sulfolobus solfataricus).